The sequence spans 345 residues: L-threonine 3-dehydrogenase (345 aa).

Cys-42 contacts Zn(2+). Catalysis depends on charge relay system residues Thr-44 and His-47. Zn(2+)-binding residues include His-67, Glu-68, Cys-97, Cys-100, Cys-103, and Cys-111. Residues Ile-179, Asp-199, Arg-204, 266–268, and 290–291 each bind NAD(+); these read LGI and IY.

It belongs to the zinc-containing alcohol dehydrogenase family. Homotetramer. Zn(2+) is required as a cofactor.

The protein localises to the cytoplasm. The enzyme catalyses L-threonine + NAD(+) = (2S)-2-amino-3-oxobutanoate + NADH + H(+). It functions in the pathway amino-acid degradation; L-threonine degradation via oxydo-reductase pathway; glycine from L-threonine: step 1/2. Functionally, catalyzes the NAD(+)-dependent oxidation of L-threonine to 2-amino-3-ketobutyrate. This is L-threonine 3-dehydrogenase from Rhizobium etli (strain ATCC 51251 / DSM 11541 / JCM 21823 / NBRC 15573 / CFN 42).